The sequence spans 447 residues: Innexin-5 (447 aa).

4 helical membrane-spanning segments follow: residues 30 to 47 (TSTL…SQYV), 108 to 128 (QWIP…SIIW), 198 to 218 (ALYL…FWIL), and 283 to 303 (VYVF…CSLA). The tract at residues 389-447 (KKDDDSALPASAPVDLQEDDDDDTPFPPPTKAVAETLTSDDEEEETDVDSPDTTATLPR) is disordered. Residues 426–438 (TSDDEEEETDVDS) show a composition bias toward acidic residues.

It belongs to the pannexin family.

Its subcellular location is the cell membrane. The protein resides in the cell junction. It localises to the gap junction. Structural component of the gap junctions. The sequence is that of Innexin-5 (inx-5) from Caenorhabditis elegans.